A 220-amino-acid polypeptide reads, in one-letter code: Thiopurine S-methyltransferase (220 aa).

S-adenosyl-L-methionine-binding residues include Trp10, Leu45, Glu66, and Arg123.

Belongs to the class I-like SAM-binding methyltransferase superfamily. TPMT family.

It localises to the cytoplasm. It catalyses the reaction S-adenosyl-L-methionine + a thiopurine = S-adenosyl-L-homocysteine + a thiopurine S-methylether.. In Nitrosospira multiformis (strain ATCC 25196 / NCIMB 11849 / C 71), this protein is Thiopurine S-methyltransferase.